The following is a 445-amino-acid chain: Phosphoglucosamine mutase (445 aa).

Residue serine 102 is the Phosphoserine intermediate of the active site. Residues serine 102, aspartate 241, aspartate 243, and aspartate 245 each contribute to the Mg(2+) site. Position 102 is a phosphoserine (serine 102).

It belongs to the phosphohexose mutase family. Mg(2+) is required as a cofactor. In terms of processing, activated by phosphorylation.

It carries out the reaction alpha-D-glucosamine 1-phosphate = D-glucosamine 6-phosphate. In terms of biological role, catalyzes the conversion of glucosamine-6-phosphate to glucosamine-1-phosphate. This is Phosphoglucosamine mutase from Rhodococcus jostii (strain RHA1).